A 286-amino-acid polypeptide reads, in one-letter code: ATP synthase gamma chain (286 aa).

Belongs to the ATPase gamma chain family. In terms of assembly, F-type ATPases have 2 components, CF(1) - the catalytic core - and CF(0) - the membrane proton channel. CF(1) has five subunits: alpha(3), beta(3), gamma(1), delta(1), epsilon(1). CF(0) has three main subunits: a, b and c.

The protein localises to the cell inner membrane. Produces ATP from ADP in the presence of a proton gradient across the membrane. The gamma chain is believed to be important in regulating ATPase activity and the flow of protons through the CF(0) complex. This is ATP synthase gamma chain from Pseudomonas entomophila (strain L48).